Here is a 198-residue protein sequence, read N- to C-terminus: Na(+)-translocating NADH-quinone reductase subunit E (198 aa).

Transmembrane regions (helical) follow at residues 11–31, 35–55, 77–97, 109–129, 140–160, and 176–196; these read AVFIENMALAFFLGMCTFLAV, VTTAFGLGIAVTVVLGISVPA, FLNFITFIGVIAALVQILEMI, LGIFLPLITVNCAIFGGVSFM, IVYGFGSGIGWMLAIVLLASI, and LGITFVTTGLMALGFMSFSGV.

It belongs to the NqrDE/RnfAE family. Composed of six subunits; NqrA, NqrB, NqrC, NqrD, NqrE and NqrF.

It localises to the cell inner membrane. The enzyme catalyses a ubiquinone + n Na(+)(in) + NADH + H(+) = a ubiquinol + n Na(+)(out) + NAD(+). Its function is as follows. NQR complex catalyzes the reduction of ubiquinone-1 to ubiquinol by two successive reactions, coupled with the transport of Na(+) ions from the cytoplasm to the periplasm. NqrA to NqrE are probably involved in the second step, the conversion of ubisemiquinone to ubiquinol. This is Na(+)-translocating NADH-quinone reductase subunit E from Photorhabdus laumondii subsp. laumondii (strain DSM 15139 / CIP 105565 / TT01) (Photorhabdus luminescens subsp. laumondii).